The chain runs to 252 residues: Hydroxyacylglutathione hydrolase (252 aa).

7 residues coordinate Zn(2+): His-54, His-56, Asp-58, His-59, His-113, Asp-132, and His-170.

The protein belongs to the metallo-beta-lactamase superfamily. Glyoxalase II family. As to quaternary structure, monomer. Requires Zn(2+) as cofactor.

It carries out the reaction an S-(2-hydroxyacyl)glutathione + H2O = a 2-hydroxy carboxylate + glutathione + H(+). It functions in the pathway secondary metabolite metabolism; methylglyoxal degradation; (R)-lactate from methylglyoxal: step 2/2. Its function is as follows. Thiolesterase that catalyzes the hydrolysis of S-D-lactoyl-glutathione to form glutathione and D-lactic acid. This chain is Hydroxyacylglutathione hydrolase, found in Gloeobacter violaceus (strain ATCC 29082 / PCC 7421).